Consider the following 559-residue polypeptide: MLDRLAFLQQLPLLLKGTSDDDTPCPGYLYEEFAKISYESVGSCQCLLEYLLNRLQTSSCHVKLKVLKILLSLCFHGSPQFIQDLRRNSAYIQEAAAVSGPPDPLHGISLYQKVRVTAQEIVGNLFSESIPSPSHTVSAKERSQSGMGSQASSAPALHGFGYSQEEKNLGNSKDTFLNGIQRAAVAVTHSVLPGAGLSHTHACERADDAYKPVAIPSTDRRPLPGNSLPTSAHRGCHRSGVPGGGWDESDSGNSSQESPHDKSPLSRSSDVGSKSGSDGQSRNSQRESLDITDRVEFTHLSDCQQEARLVQEVTWGKRVFLTQEESQQFVRGCSLLNCEVVFEMLNCSLTDDSNCIKLRSMCAISSLMASDLLSHEHMLAVVRQNLQTLTGGPPGPVKDKATKILRQFQALTQNFSERGAVHHETSPSPTTHCSLDLFADVIPHSVVSGLLTSLSVPSSPTLNVQNTVCSLPNGAANQKNPNGSTEKSDPAEELRVETGDHISTNIHVSLFEGMELVGTMKCSHKEDTIGYRAGGLSVEPAKEEPSKPTLSSVFSFLNT.

Residues 2–135 (LDRLAFLQQL…FSESIPSPSH (134 aa)) form the ENTH domain. 3 disordered regions span residues 131–157 (PSPS…APAL), 214–290 (AIPS…ESLD), and 472–491 (PNGA…SDPA). Composition is skewed to low complexity over residues 144–154 (QSGMGSQASSA) and 266–281 (SRSS…DGQS). The span at 472-485 (PNGAANQKNPNGST) shows a compositional bias: polar residues.

The protein resides in the golgi apparatus. It localises to the trans-Golgi network membrane. The protein localises to the cytoplasmic vesicle. Its subcellular location is the cytoplasm. It is found in the cytosol. May play a role in vesicular trafficking of proteins at the trans-Golgi network. The polypeptide is AP-4 complex accessory subunit tepsin (Xenopus laevis (African clawed frog)).